Here is a 33-residue protein sequence, read N- to C-terminus: Brevinin-2CDYb (33 aa).

Cysteines 27 and 33 form a disulfide.

Belongs to the frog skin active peptide (FSAP) family. Brevinin subfamily. Expressed by the skin glands.

Its subcellular location is the secreted. Antimicrobial peptide. This is Brevinin-2CDYb from Rana dybowskii (Dybovsky's frog).